The following is a 468-amino-acid chain: Ribulose bisphosphate carboxylase large chain (468 aa).

Lys-5 is subject to N6,N6,N6-trimethyllysine. Asn-114 and Thr-164 together coordinate substrate. The active-site Proton acceptor is the Lys-166. Lys-168 is a binding site for substrate. Mg(2+) contacts are provided by Lys-192, Asp-194, and Glu-195. Lys-192 is modified (N6-carboxylysine). The active-site Proton acceptor is His-285. Positions 286, 318, and 370 each coordinate substrate.

This sequence belongs to the RuBisCO large chain family. Type I subfamily. As to quaternary structure, heterohexadecamer of 8 large chains and 8 small chains; disulfide-linked. The disulfide link is formed within the large subunit homodimers. Mg(2+) is required as a cofactor. The disulfide bond which can form in the large chain dimeric partners within the hexadecamer appears to be associated with oxidative stress and protein turnover.

The protein resides in the plastid. The protein localises to the chloroplast. It carries out the reaction 2 (2R)-3-phosphoglycerate + 2 H(+) = D-ribulose 1,5-bisphosphate + CO2 + H2O. The catalysed reaction is D-ribulose 1,5-bisphosphate + O2 = 2-phosphoglycolate + (2R)-3-phosphoglycerate + 2 H(+). Functionally, ruBisCO catalyzes two reactions: the carboxylation of D-ribulose 1,5-bisphosphate, the primary event in carbon dioxide fixation, as well as the oxidative fragmentation of the pentose substrate in the photorespiration process. Both reactions occur simultaneously and in competition at the same active site. The sequence is that of Ribulose bisphosphate carboxylase large chain from Catesbaea spinosa.